The primary structure comprises 287 residues: Elongation factor Ts (287 aa).

The involved in Mg(2+) ion dislocation from EF-Tu stretch occupies residues 80 to 83; that stretch reads TDFL.

Belongs to the EF-Ts family.

The protein localises to the cytoplasm. Functionally, associates with the EF-Tu.GDP complex and induces the exchange of GDP to GTP. It remains bound to the aminoacyl-tRNA.EF-Tu.GTP complex up to the GTP hydrolysis stage on the ribosome. This chain is Elongation factor Ts, found in Pseudomonas putida (strain ATCC 47054 / DSM 6125 / CFBP 8728 / NCIMB 11950 / KT2440).